Reading from the N-terminus, the 283-residue chain is Tetraspanin-33 (283 aa).

Residues 1–24 are Cytoplasmic-facing; it reads MARRPRAPAASGEEFSFVSPLVKY. Residues 25–45 traverse the membrane as a helical segment; sequence LLFFFNMLFWVISMVMVAVGV. Residues 46–64 are Extracellular-facing; the sequence is YARLMKHAEAALACLAVDP. Residues 65–85 traverse the membrane as a helical segment; the sequence is AILLIVVGVLMFLLTFCGCIG. Topologically, residues 86–96 are cytoplasmic; sequence SLRENICLLQT. The helical transmembrane segment at 97-117 threads the bilayer; sequence FSLCLTAVFLLQLAAGILGFV. Residues 118–235 are Extracellular-facing; that stretch reads FSDKARGKVS…DKLVNWIHSN (118 aa). Cystine bridges form between Cys156–Cys224, Cys157–Cys189, Cys173–Cys183, and Cys190–Cys203. Asn172 is a glycosylation site (N-linked (GlcNAc...) asparagine). The helical transmembrane segment at 236-256 threads the bilayer; that stretch reads LFLLGGVALGLAIPQLVGILL. Over 257-283 the chain is Cytoplasmic; sequence SQILVNQIKDQIKLQLYNQQHRADPWY.

The protein belongs to the tetraspanin (TM4SF) family. In terms of assembly, homodimer; disulfide-linked. Interacts (via extracellular domain) with ADAM10 (via extracellular domain). Interacts (via cytoplasmic domain) with PLEKHA7 (via WW domains); the interaction is dependent on PDZD11 being bound to PLEKHA7 and facilitates the docking of ADAM10 to zonula adherens. In terms of tissue distribution, predominantly expressed in erythroblasts.

The protein localises to the cell membrane. It is found in the cell junction. The protein resides in the adherens junction. Its subcellular location is the cytoplasm. Functionally, part of TspanC8 subgroup, composed of 6 members that interact with the transmembrane metalloprotease ADAM10. This interaction is required for ADAM10 exit from the endoplasmic reticulum and for enzymatic maturation and trafficking to the cell surface as well as substrate specificity. Different TspanC8/ADAM10 complexes have distinct substrates. Plays an important role in normal erythropoiesis. It has a role in the differentiation of erythroid progenitors. Negatively regulates ligand-induced Notch activity probably by regulating ADAM10 activity. Mediates docking of ADAM10 to zonula adherens by interacting with ADAM10 and, in a PDZD11-dependent manner, with the zonula adherens protein PLEKHA7. In Homo sapiens (Human), this protein is Tetraspanin-33.